The following is a 61-amino-acid chain: Large ribosomal subunit protein uL30 (61 aa).

This sequence belongs to the universal ribosomal protein uL30 family. Part of the 50S ribosomal subunit.

This is Large ribosomal subunit protein uL30 from Thermobifida fusca (strain YX).